Here is a 467-residue protein sequence, read N- to C-terminus: Matrix metalloproteinase-18 (467 aa).

The N-terminal stretch at 1 to 17 is a signal peptide; that stretch reads MNSLLLKLLLCVAITAA. Positions 18 to 99 are excised as a propeptide; the sequence is FPADKQDEPP…PRCGVYDVGQ (82 aa). A Cysteine switch motif is present at residues 90–97; sequence PRCGVYDV. Residues Cys-92 and His-218 each coordinate Zn(2+). Residue Glu-219 is part of the active site. 2 residues coordinate Zn(2+): His-222 and His-228. Hemopexin repeat units follow at residues 277-326, 327-373, 375-423, and 424-467; these read PSRC…WPSL, PTNI…GFPK, VKRI…FPGI, and PDKI…WLGC. An intrachain disulfide couples Cys-280 to Cys-467.

The protein belongs to the peptidase M10A family. It depends on Zn(2+) as a cofactor. The cofactor is Ca(2+). In terms of tissue distribution, expressed only transiently in whole animal, at time when tadpole feeding begins.

It localises to the secreted. The protein localises to the extracellular space. Its subcellular location is the extracellular matrix. With respect to regulation, up-regulated in the tail by thyroid hormone. Functionally, cleaves collagen type I. May play a role in larval tissue degeneration and adult organogenesis during amphibian metamorphosis. May be involved in tail resorption. The chain is Matrix metalloproteinase-18 (mmp18) from Xenopus laevis (African clawed frog).